Reading from the N-terminus, the 29-residue chain is Cytochrome b6-f complex subunit 8 (29 aa).

A helical transmembrane segment spans residues 3–23 (IVDIAWAALMVVFTFSLSLVV).

Belongs to the PetN family. In terms of assembly, the 4 large subunits of the cytochrome b6-f complex are cytochrome b6, subunit IV (17 kDa polypeptide, PetD), cytochrome f and the Rieske protein, while the 4 small subunits are PetG, PetL, PetM and PetN. The complex functions as a dimer.

It is found in the plastid. It localises to the chloroplast thylakoid membrane. Functionally, component of the cytochrome b6-f complex, which mediates electron transfer between photosystem II (PSII) and photosystem I (PSI), cyclic electron flow around PSI, and state transitions. The protein is Cytochrome b6-f complex subunit 8 of Gnetum parvifolium (Small-leaved jointfir).